A 312-amino-acid chain; its full sequence is Ubiquinone biosynthesis protein COQ9, mitochondrial (312 aa).

Residues 1–45 (MAATAAVSGVLRRLGWRLLQLRCLPVARCQSPLMPRAFHTAVGFR) constitute a mitochondrion transit peptide. The SIFI-degron motif lies at 17–32 (RLLQLRCLPVARCQSP). The disordered stretch occupies residues 43-92 (GFRSSEEQRQQPPHSSQQHSETQGPEFSRPPPRYTDQSGEEEEDYESEEQ). Positions 52-63 (QQPPHSSQQHSE) are enriched in low complexity. Ser-80 carries the post-translational modification Phosphoserine. The segment covering 80–91 (SGEEEEDYESEE) has biased composition (acidic residues). Residue Lys-169 is modified to N6-acetyllysine. Arg-238 serves as a coordination point for a 1,2-diacylglycero-3-phosphoethanolamine.

Belongs to the COQ9 family. In terms of assembly, homodimer. Heterodimer; two heterodimers of COQ7:COQ9 come together on the same side of the lipid pseudo-bilayer and form a curved tetramer with a hydrophobic surface suitable for membrane interaction. These two tetramers assemble into a soluble octamer with a pseudo-bilayer of lipids captured within. Interacts with COQ7; this interaction allows ubiquinone (CoQ) isoprene intermediates presentation to COQ7 and facilitates the COQ7-mediated hydroxylase step. Post-translationally, in response to mitochondrial stress, the precursor protein is ubiquitinated by the SIFI complex in the cytoplasm before mitochondrial import, leading to its degradation. Within the SIFI complex, UBR4 initiates ubiquitin chain that are further elongated or branched by KCMF1.

Its subcellular location is the mitochondrion. It functions in the pathway cofactor biosynthesis; ubiquinone biosynthesis. Its function is as follows. Membrane-associated protein that warps the membrane surface to access and bind aromatic isoprenes with high specificity, including ubiquinone (CoQ) isoprene intermediates and presents them directly to COQ7, therefore facilitating the COQ7-mediated hydroxylase step. Participates in the biosynthesis of coenzyme Q, also named ubiquinone, an essential lipid-soluble electron transporter for aerobic cellular respiration. In Rattus norvegicus (Rat), this protein is Ubiquinone biosynthesis protein COQ9, mitochondrial.